The chain runs to 332 residues: DNA-directed RNA polymerase subunit alpha (332 aa).

An alpha N-terminal domain (alpha-NTD) region spans residues 1–230; sequence MKKITTSAYM…KQMSIFNNVL (230 aa). The interval 246 to 332 is alpha C-terminal domain (alpha-CTD); the sequence is EHSKLLESVE…LRKKISELKS (87 aa).

This sequence belongs to the RNA polymerase alpha chain family. Homodimer. The RNAP catalytic core consists of 2 alpha, 1 beta, 1 beta' and 1 omega subunit. When a sigma factor is associated with the core the holoenzyme is formed, which can initiate transcription.

The enzyme catalyses RNA(n) + a ribonucleoside 5'-triphosphate = RNA(n+1) + diphosphate. Its function is as follows. DNA-dependent RNA polymerase catalyzes the transcription of DNA into RNA using the four ribonucleoside triphosphates as substrates. In Campylobacter fetus subsp. fetus (strain 82-40), this protein is DNA-directed RNA polymerase subunit alpha.